The following is a 112-amino-acid chain: uncharacterized protein (112 aa).

Residues 90–112 are disordered; sequence KNFNNSKNDQIKKKKIDNNQVNL.

This is an uncharacterized protein from Buchnera aphidicola subsp. Acyrthosiphon pisum (strain APS) (Acyrthosiphon pisum symbiotic bacterium).